The primary structure comprises 306 residues: UDP-3-O-acyl-N-acetylglucosamine deacetylase (306 aa).

The Zn(2+) site is built by His79, His238, and Asp242. His265 acts as the Proton donor in catalysis.

This sequence belongs to the LpxC family. Zn(2+) serves as cofactor.

The enzyme catalyses a UDP-3-O-[(3R)-3-hydroxyacyl]-N-acetyl-alpha-D-glucosamine + H2O = a UDP-3-O-[(3R)-3-hydroxyacyl]-alpha-D-glucosamine + acetate. Its pathway is glycolipid biosynthesis; lipid IV(A) biosynthesis; lipid IV(A) from (3R)-3-hydroxytetradecanoyl-[acyl-carrier-protein] and UDP-N-acetyl-alpha-D-glucosamine: step 2/6. In terms of biological role, catalyzes the hydrolysis of UDP-3-O-myristoyl-N-acetylglucosamine to form UDP-3-O-myristoylglucosamine and acetate, the committed step in lipid A biosynthesis. In Yersinia pseudotuberculosis serotype O:1b (strain IP 31758), this protein is UDP-3-O-acyl-N-acetylglucosamine deacetylase.